Here is a 158-residue protein sequence, read N- to C-terminus: NADH-quinone oxidoreductase subunit B (158 aa).

Residues cysteine 36, cysteine 37, cysteine 101, and cysteine 131 each coordinate [4Fe-4S] cluster.

Belongs to the complex I 20 kDa subunit family. In terms of assembly, NDH-1 is composed of 14 different subunits. Subunits NuoB, C, D, E, F, and G constitute the peripheral sector of the complex. [4Fe-4S] cluster is required as a cofactor.

The protein resides in the cell inner membrane. It carries out the reaction a quinone + NADH + 5 H(+)(in) = a quinol + NAD(+) + 4 H(+)(out). NDH-1 shuttles electrons from NADH, via FMN and iron-sulfur (Fe-S) centers, to quinones in the respiratory chain. The immediate electron acceptor for the enzyme in this species is believed to be ubiquinone. Couples the redox reaction to proton translocation (for every two electrons transferred, four hydrogen ions are translocated across the cytoplasmic membrane), and thus conserves the redox energy in a proton gradient. This chain is NADH-quinone oxidoreductase subunit B, found in Francisella philomiragia subsp. philomiragia (strain ATCC 25017 / CCUG 19701 / FSC 153 / O#319-036).